The following is a 290-amino-acid chain: Isopentenyl-diphosphate Delta-isomerase II (290 aa).

Positions 108–260 constitute a Nudix hydrolase domain; sequence MLHRAFTVFL…GLKLSPWFRL (153 aa). Active-site residues include cysteine 145 and glutamate 207.

The protein belongs to the IPP isomerase type 1 family.

It catalyses the reaction isopentenyl diphosphate = dimethylallyl diphosphate. It participates in isoprenoid biosynthesis; dimethylallyl diphosphate biosynthesis; dimethylallyl diphosphate from isopentenyl diphosphate: step 1/1. It functions in the pathway porphyrin-containing compound metabolism; chlorophyll biosynthesis. Its function is as follows. Catalyzes the 1,3-allylic rearrangement of the homoallylic substrate isopentenyl (IPP) to its highly electrophilic allylic isomer, dimethylallyl diphosphate (DMAPP). This chain is Isopentenyl-diphosphate Delta-isomerase II (IPI2), found in Clarkia xantiana (Gunsight clarkia).